The sequence spans 623 residues: MPPKVTSELLRQLRQAMRNSEYVTEPIQAYIIPSGDAHQSEYIAPCDCRRAFVSGFDGSAGTAIITEEHAAMWTDGRYFLQAAKQMDSNWTLMKMGLKDTPTQEDWLVSVLPEGSRVGVDPLIIPTDYWKKMAKVLRSAGHHLIPVKENLVDKIWTDRPERPCKPLLTLGLDYTGISWKDKVADLRLKMAERNVMWFVVTALDEIAWLFNLRGSDVEHNPVFFSYAIIGLETIMLFIDGDRIDAPSVKEHLLLDLGLEAEYRIQVHPYKSILSELKALCADLSPREKVWVSDKASYAVSETIPKDHRCCMPYTPICIAKAVKNSAESEGMRRAHIKDAVALCELFNWLEKEVPKGGVTEISAADKAEEFRRQQADFVDLSFPTISSTGPNGAIIHYAPVPETNRTLSLDEVYLIDSGAQYKDGTTDVTRTMHFGTPTAYEKECFTYVLKGHIAVSAAVFPTGTKGHLLDSFARSALWDSGLDYLHGTGHGVGSFLNVHEGPCGISYKTFSDEPLEAGMIVTDEPGYYEDGAFGIRIENVVLVVPVKTKYNFNNRGSLTFEPLTLVPIQTKMIDVDSLTDKECDWLNNYHLTCRDVIGKELQKQGRQEALEWLIRETQPISKQH.

Arg-77 lines the a peptide pocket. At Lys-304 the chain carries N6-acetyllysine. Residue His-395 coordinates a peptide. Positions 415, 426, and 489 each coordinate Mn(2+). 3 residues coordinate a peptide: His-489, His-498, and Glu-523. Residues Glu-523 and Glu-537 each contribute to the Mn(2+) site.

It belongs to the peptidase M24B family. In terms of assembly, homodimer. It depends on Mn(2+) as a cofactor. As to expression, expressed in all tissues tested, including pancreas, heart, muscle, kidney, liver, lung and brain. Highest levels in pancreas.

The protein resides in the cytoplasm. The protein localises to the cytosol. The catalysed reaction is Release of any N-terminal amino acid, including proline, that is linked to proline, even from a dipeptide or tripeptide.. With respect to regulation, inhibited by apstatin and the metal ion chelators EDTA and 1,10-phenanthroline. Partially inhibited by dithiothreitol. Not inhibited by enalaprilat or amastatin. Specifically inhibited by the pseudodipeptide CQ31. Inhibition by CQ31 indirectly activates the CARD8 inflammasome: dipeptide accumulation following PEPD inactivation weaky inhibit dipeptidyl peptidases DDP8 and DPP9, relieving DPP8- and/or DPP9-mediated inhibition of CARD8. Metalloaminopeptidase that catalyzes the removal of a penultimate prolyl residue from the N-termini of peptides, such as Arg-Pro-Pro. Contributes to the degradation of bradykinin. The polypeptide is Xaa-Pro aminopeptidase 1 (Homo sapiens (Human)).